The primary structure comprises 429 residues: MRVKYFGTDGIRGIFGETLTDELAFKVGKALGEIVGEGKVIVGKDTRVSGDSLEAAISAGLTSMGVDVLLCGILPTPAVALLTRITRSFGVVISASHNPPEYNGIKVLKGGYKIPDEMEAEIEKRLENGSFLTRSVVGRTKSFREGRDMYIGAVLEMFRDLDLTGEMVSLDLANGATTTTAREVFEFLGAKVEVFNDSQDGLLINQGCGATHPRFLAEEMKNGKVGFTFDGDGDRVIAVDEERNVVNGDRIIGILAVGLKEEGRLNSDTVVGTVMTNGGLEDFLKEKGIRLLRTKVGDKYVLEKMLESGANLGGERSGHIIILDRSTTGDGLITALELMRVLKRSGRKLSDFAKEIPDYPQITKNVRRTERMSLENENLRKIVEESTSRGYRVVIRPSGTEPVIRITVEGKDREEIEKIVEEISRVLES.

The active-site Phosphoserine intermediate is S96. Residues S96, D230, D232, and D234 each coordinate Mg(2+). Phosphoserine is present on S96.

This sequence belongs to the phosphohexose mutase family. The cofactor is Mg(2+). In terms of processing, activated by phosphorylation.

It catalyses the reaction alpha-D-glucosamine 1-phosphate = D-glucosamine 6-phosphate. Its function is as follows. Catalyzes the conversion of glucosamine-6-phosphate to glucosamine-1-phosphate. In Thermotoga maritima (strain ATCC 43589 / DSM 3109 / JCM 10099 / NBRC 100826 / MSB8), this protein is Phosphoglucosamine mutase.